Here is a 324-residue protein sequence, read N- to C-terminus: Acetyl-coenzyme A carboxylase carboxyl transferase subunit alpha (324 aa).

In terms of domain architecture, CoA carboxyltransferase C-terminal spans 37–291 (KLEKRLDKLK…REFIIQEWLR (255 aa)).

This sequence belongs to the AccA family. Acetyl-CoA carboxylase is a heterohexamer composed of biotin carboxyl carrier protein (AccB), biotin carboxylase (AccC) and two subunits each of ACCase subunit alpha (AccA) and ACCase subunit beta (AccD).

It localises to the cytoplasm. It carries out the reaction N(6)-carboxybiotinyl-L-lysyl-[protein] + acetyl-CoA = N(6)-biotinyl-L-lysyl-[protein] + malonyl-CoA. Its pathway is lipid metabolism; malonyl-CoA biosynthesis; malonyl-CoA from acetyl-CoA: step 1/1. Component of the acetyl coenzyme A carboxylase (ACC) complex. First, biotin carboxylase catalyzes the carboxylation of biotin on its carrier protein (BCCP) and then the CO(2) group is transferred by the carboxyltransferase to acetyl-CoA to form malonyl-CoA. This is Acetyl-coenzyme A carboxylase carboxyl transferase subunit alpha from Chlamydia pneumoniae (Chlamydophila pneumoniae).